Here is a 275-residue protein sequence, read N- to C-terminus: Photosystem II extrinsic protein O (275 aa).

A signal peptide spans 1–28 (MRFRTLLIAFLALCLGLITACSEGPANA).

It belongs to the PsbO family. In terms of assembly, PSII is composed of 1 copy each of membrane proteins PsbA, PsbB, PsbC, PsbD, PsbE, PsbF, PsbH, PsbI, PsbJ, PsbK, PsbL, PsbM, PsbT, PsbX, PsbY, PsbZ, Psb30/Ycf12, peripheral proteins PsbO, CyanoQ (PsbQ), PsbU, PsbV and a large number of cofactors. It forms dimeric complexes.

The protein localises to the cellular thylakoid membrane. Its function is as follows. One of the extrinsic, lumenal subunits of photosystem II (PSII), which stabilize and protect the oxygen-evolving complex. PSII is a light-driven water plastoquinone oxidoreductase, using light energy to abstract electrons from H(2)O, generating a proton gradient subsequently used for ATP formation. Required for dimerization of PSII and for binding of PsbQ to PSII. The polypeptide is Photosystem II extrinsic protein O (Crocosphaera subtropica (strain ATCC 51142 / BH68) (Cyanothece sp. (strain ATCC 51142))).